The sequence spans 223 residues: Cytidylate kinase (223 aa).

10 to 18 (GPASSGKST) lines the ATP pocket.

It belongs to the cytidylate kinase family. Type 1 subfamily.

It localises to the cytoplasm. It carries out the reaction CMP + ATP = CDP + ADP. The enzyme catalyses dCMP + ATP = dCDP + ADP. This chain is Cytidylate kinase, found in Streptococcus pneumoniae (strain Hungary19A-6).